We begin with the raw amino-acid sequence, 207 residues long: Putative transcriptional regulator (207 aa).

One can recognise a Response regulatory domain in the interval 3-118; sequence KVLIVDDHPA…ELLLAAKAVL (116 aa). 2 positions are modified to 4-aspartylphosphate: Asp-9 and Asp-53. The HTH luxR-type domain maps to 140-205; the sequence is EARMLESLSD…GLIDFARRHE (66 aa). A DNA-binding region (H-T-H motif) is located at residues 155–174; the sequence is LQYLANGNTNKAIAQQLFLS.

Probable transcriptional regulator. This Pseudomonas aeruginosa (strain ATCC 15692 / DSM 22644 / CIP 104116 / JCM 14847 / LMG 12228 / 1C / PRS 101 / PAO1) protein is Putative transcriptional regulator.